The sequence spans 341 residues: Porin-like protein L (341 aa).

Residues 1–21 form the signal peptide; it reads MNKKLIALAVAAASISSVATA.

Belongs to the Gram-negative porin family. As to quaternary structure, homotrimer.

Its subcellular location is the cell outer membrane. In terms of biological role, forms pores that allow passive diffusion of small molecules across the outer membrane. This Photobacterium profundum (strain SS9) protein is Porin-like protein L (ompL).